The chain runs to 703 residues: NADH-quinone oxidoreductase chain 12 (703 aa).

A run of 16 helical transmembrane segments spans residues 4 to 24 (FVLF…RAIG), 30 to 50 (YLTT…FLSF), 79 to 99 (LTAI…MYSL), 116 to 136 (ARFF…VTAD), 138 to 158 (LLQM…LIGF), 179 to 199 (GDFG…SVQF), 224 to 244 (ANLL…QLLL), 256 to 276 (TPVS…FLVC), 290 to 310 (NFIV…GLVQ), 325 to 345 (LGYM…FHLL), 346 to 366 (THAF…HAMH), 381 to 401 (IPLT…VGIP), 415 to 435 (AIIE…VIAA), 475 to 495 (LGVL…PFFG), 580 to 600 (VSPF…YIAN), and 679 to 699 (LFHY…WVMM).

The protein belongs to the complex I subunit 5 family. In terms of assembly, NDH-1 is composed of at least 14 different subunits, Nqo1 to Nqo14. The complex has a L-shaped structure, with the hydrophobic arm (subunits Nqo7, Nqo8, Nqo10 to Nqo14) embedded in the inner membrane and the hydrophilic peripheral arm (subunits Nqo1 to Nqo6, Nqo9) protruding into the bacterial cytoplasm. The hydrophilic domain contains all the redox centers.

Its subcellular location is the cell inner membrane. It carries out the reaction a quinone + NADH + 5 H(+)(in) = a quinol + NAD(+) + 4 H(+)(out). In terms of biological role, NDH-1 shuttles electrons from NADH, via FMN and iron-sulfur (Fe-S) centers, to quinones in the respiratory chain. The immediate electron acceptor for the enzyme in this species is believed to be ubiquinone. Couples the redox reaction to proton translocation (for every two electrons transferred, four hydrogen ions are translocated across the cytoplasmic membrane), and thus conserves the redox energy in a proton gradient. In Paracoccus denitrificans, this protein is NADH-quinone oxidoreductase chain 12.